The sequence spans 415 residues: Gamma-glutamyl phosphate reductase (415 aa).

The protein belongs to the gamma-glutamyl phosphate reductase family.

The protein localises to the cytoplasm. The enzyme catalyses L-glutamate 5-semialdehyde + phosphate + NADP(+) = L-glutamyl 5-phosphate + NADPH + H(+). The protein operates within amino-acid biosynthesis; L-proline biosynthesis; L-glutamate 5-semialdehyde from L-glutamate: step 2/2. In terms of biological role, catalyzes the NADPH-dependent reduction of L-glutamate 5-phosphate into L-glutamate 5-semialdehyde and phosphate. The product spontaneously undergoes cyclization to form 1-pyrroline-5-carboxylate. This chain is Gamma-glutamyl phosphate reductase, found in Pseudoalteromonas translucida (strain TAC 125).